The primary structure comprises 334 residues: Hydroxyproline O-arabinosyltransferase NOD3 (334 aa).

Residues 1–18 form a helical; Signal-anchor membrane-spanning segment; that stretch reads LLMVLGFFFATYNLVSMI.

The protein belongs to the RDN family.

The protein localises to the golgi apparatus membrane. The catalysed reaction is trans-4-hydroxy-L-prolyl-[protein] + UDP-beta-L-arabinofuranose = O-(beta-L-arabinofuranosyl)-trans-4-hydroxy-L-prolyl-[protein] + UDP + H(+). Its function is as follows. Probable glycosyltransferase involved in the O-arabinosylation of several proteins including extensins and small signaling peptides. Catalyzes the transfer of the initial L-arabinose to the hydroxyl group of Hyp residues. Probably involved in the arabinosylation of CLAVATA3/ESR-related (CLE) signaling peptides that move from root to shoot, to interact with receptor kinase signaling that regulates nodulation. Involved in long distance nodulation signaling events. Involved in the autoregulation of nodulation (AON), a long distance systemic signaling from root to shoot and back again, which allows legumes to limit the number of root nodules formed based on available nitrogen and previous rhizobial colonization. The polypeptide is Hydroxyproline O-arabinosyltransferase NOD3 (Pisum sativum (Garden pea)).